The chain runs to 111 residues: Translation initiation factor 1A 1 (111 aa).

The tract at residues 1–28 (MTLADLKKPTSRASPSTEETVTRVRTPR) is disordered. The region spanning 22 to 96 (TRVRTPRREN…EKADVIWKYT (75 aa)) is the S1-like domain.

This sequence belongs to the eIF-1A family.

Its function is as follows. Seems to be required for maximal rate of protein biosynthesis. Enhances ribosome dissociation into subunits and stabilizes the binding of the initiator Met-tRNA(I) to 40 S ribosomal subunits. In Methanosarcina mazei (strain ATCC BAA-159 / DSM 3647 / Goe1 / Go1 / JCM 11833 / OCM 88) (Methanosarcina frisia), this protein is Translation initiation factor 1A 1 (eIF1A1).